The chain runs to 350 residues: MTSGMAQTVCGLLQPQKLGRTLTHEHMVMDYKSCYFKPSREQDLHLCSKKEITMQNLYWLRQNPYSNAFNLSLGDEPLEEIIAEVAEFKKEGGSTIVDNTTYGIMRNVEALKKISMATDVNIICGTGYYLDHTLPPEIKNAPIEELTQKMVNELTVGVEGTNIKCGVIGEVGCSWPLTPIEKKSLQASAAAQAETGAPLIIHPGRDESAPEEIIRILQEAGGDISRTVMSHTDRTIFNRSKLVELAATGCYVEWDLFGMETLFYQANLASDMPSDSQRIQDIKFLLDEGYEDKIVIAHDIHTRHRLKKYGGHGYAHIMVDIVPKMLMRGVTQEQIDKIQIANPRTWLTFK.

H24, H26, E170, H202, H231, and D299 together coordinate a divalent metal cation.

The protein belongs to the metallo-dependent hydrolases superfamily. Phosphotriesterase family. It depends on a divalent metal cation as a cofactor.

The sequence is that of Phosphotriesterase-related protein from Nematostella vectensis (Starlet sea anemone).